We begin with the raw amino-acid sequence, 265 residues long: Pre-mRNA-splicing factor cwf15 (265 aa).

Disordered regions lie at residues 1–31 and 62–197; these read MTTA…ALPA and AAHF…ALEQ. Residues 113–125 show a composition bias toward acidic residues; it reads EADEDASDSDDSV. Residues 143 to 155 show a composition bias toward low complexity; that stretch reads SNSQESVDSSNSE. Positions 155-205 form a coiled coil; sequence ESSDEESDSEDETQQLLRELENIKQERKREQMLQEEKNRALEQEKREREIA. Positions 156–167 are enriched in acidic residues; the sequence is SSDEESDSEDET. Basic and acidic residues predominate over residues 172 to 197; that stretch reads RELENIKQERKREQMLQEEKNRALEQ.

Belongs to the CWC15 family. As to quaternary structure, belongs to the 40S cdc5-associated complex (or cwf complex), a spliceosome sub-complex reminiscent of a late-stage spliceosome composed of the U2, U5 and U6 snRNAs and at least brr2, cdc5, cwf2/prp3, cwf3/syf1, cwf4/syf3, cwf5/ecm2, spp42/cwf6, cwf7/spf27, cwf8, cwf9, cwf10, cwf11, cwf12, prp45/cwf13, cwf14, cwf15, cwf16, cwf17, cwf18, cwf19, cwf20, cwf21, cwf22, cwf23, cwf24, cwf25, cwf26, cyp7/cwf27, cwf28, cwf29/ist3, lea1, msl1, prp5/cwf1, prp10, prp12/sap130, prp17, prp22, sap61, sap62, sap114, sap145, slu7, smb1, smd1, smd3, smf1, smg1 and syf2.

The protein localises to the nucleus. Its function is as follows. Involved in pre-mRNA splicing. The chain is Pre-mRNA-splicing factor cwf15 (cwf15) from Schizosaccharomyces pombe (strain 972 / ATCC 24843) (Fission yeast).